The chain runs to 138 residues: Small ribosomal subunit protein uS11c (138 aa).

Positions 1-21 are disordered; that stretch reads MTKSIPRIGSRRGGRIASRKN. A compositionally biased stretch (basic residues) spans 9 to 21; sequence GSRRGGRIASRKN.

Belongs to the universal ribosomal protein uS11 family. In terms of assembly, part of the 30S ribosomal subunit.

It is found in the plastid. Its subcellular location is the chloroplast. In Calycanthus floridus var. glaucus (Eastern sweetshrub), this protein is Small ribosomal subunit protein uS11c.